The following is an 88-amino-acid chain: Small ribosomal subunit protein bS16 (88 aa).

Belongs to the bacterial ribosomal protein bS16 family.

The polypeptide is Small ribosomal subunit protein bS16 (Mesomycoplasma hyopneumoniae (strain 232) (Mycoplasma hyopneumoniae)).